The chain runs to 449 residues: Phosphoglucosamine mutase (449 aa).

The Phosphoserine intermediate role is filled by Ser-100. Residues Ser-100, Asp-241, Asp-243, and Asp-245 each coordinate Mg(2+). Residue Ser-100 is modified to Phosphoserine.

The protein belongs to the phosphohexose mutase family. Mg(2+) is required as a cofactor. Activated by phosphorylation.

It catalyses the reaction alpha-D-glucosamine 1-phosphate = D-glucosamine 6-phosphate. In terms of biological role, catalyzes the conversion of glucosamine-6-phosphate to glucosamine-1-phosphate. The protein is Phosphoglucosamine mutase of Clostridium botulinum (strain Loch Maree / Type A3).